The primary structure comprises 545 residues: Glucose-6-phosphate isomerase (545 aa).

Residue E351 is the Proton donor of the active site. Active-site residues include H382 and K510.

The protein belongs to the GPI family.

The protein localises to the cytoplasm. It carries out the reaction alpha-D-glucose 6-phosphate = beta-D-fructose 6-phosphate. It functions in the pathway carbohydrate biosynthesis; gluconeogenesis. It participates in carbohydrate degradation; glycolysis; D-glyceraldehyde 3-phosphate and glycerone phosphate from D-glucose: step 2/4. In terms of biological role, catalyzes the reversible isomerization of glucose-6-phosphate to fructose-6-phosphate. The protein is Glucose-6-phosphate isomerase of Helicobacter pylori (strain HPAG1).